We begin with the raw amino-acid sequence, 135 residues long: MVLESVARIVKVQLPAYLKRLPVPESITGFARLTVSEWLRLLPFLGVLALLGYLAVRPFLPKKKQQKDSLINLKIQKENPKVVNEINIEDLCLTKAAYCRCWRSKTFPACDGSHNKHNELTGDNVGPLILKKKEV.

The Lumenal segment spans residues 1–37 (MVLESVARIVKVQLPAYLKRLPVPESITGFARLTVSE). The chain crosses the membrane as a helical span at residues 38-60 (WLRLLPFLGVLALLGYLAVRPFL). Residues 61-135 (PKKKQQKDSL…GPLILKKKEV (75 aa)) are Cytoplasmic-facing. Cysteine 99, cysteine 101, cysteine 110, and histidine 114 together coordinate [2Fe-2S] cluster.

The protein belongs to the CISD protein family. CISD2 subfamily. Homodimer. Interacts with BCL2; the interaction is direct and disrupted by BIK interaction with BCL2. Interacts with BCL2L1. Interacts with ITPR1. The cofactor is [2Fe-2S] cluster.

Its subcellular location is the endoplasmic reticulum membrane. The protein resides in the mitochondrion outer membrane. In terms of biological role, regulator of autophagy that contributes to antagonize BECN1-mediated cellular autophagy at the endoplasmic reticulum. Participates in the interaction of BCL2 with BECN1 and is required for BCL2-mediated depression of endoplasmic reticulum Ca(2+) stores during autophagy. Contributes to BIK-initiated autophagy, while it is not involved in BIK-dependent activation of caspases. Involved in life span control, probably via its function as regulator of autophagy. In Bos taurus (Bovine), this protein is CDGSH iron-sulfur domain-containing protein 2 (CISD2).